The chain runs to 489 residues: MRVLHVCSELYPILKTGGLADVTAALPPALAGFGVDSRVLVPGFPAFINAIKDKQLLINIPSRFGAEEINIFLAKIPNTKIDIYVIDAPSLFARPGNPYADSSNQAYADNYLRFALLGWVAARISEGLDAKWKPEIVHSHDWHAGLVPAYIKASELASGKKAVKTVFTVHNLAYQGLFPMSVFTELDLPGIFLSMNGLEFYGQVSFMKAGLYFADKITTVSPTYAKEIQIYEQGCGLEGLLADRHNDLYGVLNGVDPQIWNPKKDSLIATNYSSTTVATGKAKCKLALQQMMGLAEKEDALLFGIVTRLTEQKGLNLLIEAIGEITSRGGQIVLLGSGDKALEEVFLAAAKKYSKSIAVQIGYDEEQAHRIIAGSDVIMVPSRFEPCGLTQLYGLTYGTLPLVHKVGGLADTIIDSSLENLADGTATGFVFDEFSVESLTLAIRRAFALYNRKTDWKKVRKTAMQQQVTWDSSAEKIYQIYKNLVIENN.

K15 is an ADP-alpha-D-glucose binding site.

This sequence belongs to the glycosyltransferase 1 family. Bacterial/plant glycogen synthase subfamily.

It catalyses the reaction [(1-&gt;4)-alpha-D-glucosyl](n) + ADP-alpha-D-glucose = [(1-&gt;4)-alpha-D-glucosyl](n+1) + ADP + H(+). It functions in the pathway glycan biosynthesis; glycogen biosynthesis. Synthesizes alpha-1,4-glucan chains using ADP-glucose. The protein is Glycogen synthase of Francisella tularensis subsp. holarctica (strain FTNF002-00 / FTA).